Here is a 413-residue protein sequence, read N- to C-terminus: Serine hydroxymethyltransferase (413 aa).

(6S)-5,6,7,8-tetrahydrofolate is bound by residues leucine 119 and 123-125; that span reads GHL. The residue at position 228 (lysine 228) is an N6-(pyridoxal phosphate)lysine. Glutamate 243 contacts (6S)-5,6,7,8-tetrahydrofolate.

This sequence belongs to the SHMT family. As to quaternary structure, homodimer. Pyridoxal 5'-phosphate is required as a cofactor.

The protein localises to the cytoplasm. The catalysed reaction is (6R)-5,10-methylene-5,6,7,8-tetrahydrofolate + glycine + H2O = (6S)-5,6,7,8-tetrahydrofolate + L-serine. It functions in the pathway one-carbon metabolism; tetrahydrofolate interconversion. Its pathway is amino-acid biosynthesis; glycine biosynthesis; glycine from L-serine: step 1/1. Functionally, catalyzes the reversible interconversion of serine and glycine with tetrahydrofolate (THF) serving as the one-carbon carrier. This reaction serves as the major source of one-carbon groups required for the biosynthesis of purines, thymidylate, methionine, and other important biomolecules. Also exhibits THF-independent aldolase activity toward beta-hydroxyamino acids, producing glycine and aldehydes, via a retro-aldol mechanism. This is Serine hydroxymethyltransferase from Desulforamulus reducens (strain ATCC BAA-1160 / DSM 100696 / MI-1) (Desulfotomaculum reducens).